Reading from the N-terminus, the 59-residue chain is U-myrmeciitoxin(01)-Mg5b (59 aa).

An N-terminal signal peptide occupies residues 1-21 (MRLSYLSLALAIIFVLTIMHA). Positions 22 to 38 (SNVEAKASADPEPDAVG) are excised as a propeptide.

As to expression, expressed by the venom gland.

The protein localises to the secreted. Functionally, may have antimicrobial properties, like most ant linear peptides. The polypeptide is U-myrmeciitoxin(01)-Mg5b (Myrmecia gulosa (Red bulldog ant)).